The primary structure comprises 177 residues: NADH-quinone oxidoreductase subunit B (177 aa).

[4Fe-4S] cluster-binding residues include C56, C57, C121, and C151.

This sequence belongs to the complex I 20 kDa subunit family. In terms of assembly, NDH-1 is composed of 14 different subunits. Subunits NuoB, C, D, E, F, and G constitute the peripheral sector of the complex. The cofactor is [4Fe-4S] cluster.

Its subcellular location is the cell inner membrane. The catalysed reaction is a quinone + NADH + 5 H(+)(in) = a quinol + NAD(+) + 4 H(+)(out). In terms of biological role, NDH-1 shuttles electrons from NADH, via FMN and iron-sulfur (Fe-S) centers, to quinones in the respiratory chain. Couples the redox reaction to proton translocation (for every two electrons transferred, four hydrogen ions are translocated across the cytoplasmic membrane), and thus conserves the redox energy in a proton gradient. The protein is NADH-quinone oxidoreductase subunit B of Jannaschia sp. (strain CCS1).